The primary structure comprises 92 residues: Defensin-like protein 226 (92 aa).

Positions Met1–Ser27 are cleaved as a signal peptide. Cystine bridges form between Cys33-Cys92, Cys43-Cys71, Cys51-Cys86, and Cys69-Cys88.

It belongs to the DEFL family.

It is found in the secreted. In Arabidopsis thaliana (Mouse-ear cress), this protein is Defensin-like protein 226 (SCRL2).